The following is a 270-amino-acid chain: Regulatory protein RecX (270 aa).

Belongs to the RecX family.

Its subcellular location is the cytoplasm. Functionally, modulates RecA activity. This is Regulatory protein RecX from Bacillus thuringiensis subsp. konkukian (strain 97-27).